The sequence spans 175 residues: Peptide deformylase (175 aa).

2 residues coordinate Fe cation: Cys96 and His138. Residue Glu139 is part of the active site. A Fe cation-binding site is contributed by His142.

The protein belongs to the polypeptide deformylase family. Fe(2+) serves as cofactor.

It catalyses the reaction N-terminal N-formyl-L-methionyl-[peptide] + H2O = N-terminal L-methionyl-[peptide] + formate. Removes the formyl group from the N-terminal Met of newly synthesized proteins. Requires at least a dipeptide for an efficient rate of reaction. N-terminal L-methionine is a prerequisite for activity but the enzyme has broad specificity at other positions. The polypeptide is Peptide deformylase (Helicobacter acinonychis (strain Sheeba)).